The following is a 361-amino-acid chain: Ribosomal RNA large subunit methyltransferase M (361 aa).

S-adenosyl-L-methionine is bound by residues serine 187, 220–223 (CPGG), aspartate 239, aspartate 259, and aspartate 276. Catalysis depends on lysine 305, which acts as the Proton acceptor.

Belongs to the class I-like SAM-binding methyltransferase superfamily. RNA methyltransferase RlmE family. RlmM subfamily. In terms of assembly, monomer.

The protein resides in the cytoplasm. The catalysed reaction is cytidine(2498) in 23S rRNA + S-adenosyl-L-methionine = 2'-O-methylcytidine(2498) in 23S rRNA + S-adenosyl-L-homocysteine + H(+). Functionally, catalyzes the 2'-O-methylation at nucleotide C2498 in 23S rRNA. This is Ribosomal RNA large subunit methyltransferase M from Shewanella amazonensis (strain ATCC BAA-1098 / SB2B).